Reading from the N-terminus, the 131-residue chain is Large ribosomal subunit protein bL12c (131 aa).

Basic and acidic residues predominate over residues 106–125; it reads KDNTNKENSEEIKQQLEEAG. The segment at 106–131 is disordered; it reads KDNTNKENSEEIKQQLEEAGAKVSIK.

It belongs to the bacterial ribosomal protein bL12 family. As to quaternary structure, homodimer. Part of the ribosomal stalk of the 50S ribosomal subunit. Forms a multimeric L10(L12)X complex, where L10 forms an elongated spine to which 2 to 4 L12 dimers bind in a sequential fashion. Binds GTP-bound translation factors.

Its subcellular location is the plastid. The protein localises to the chloroplast. Functionally, forms part of the ribosomal stalk which helps the ribosome interact with GTP-bound translation factors. Is thus essential for accurate translation. The protein is Large ribosomal subunit protein bL12c of Gracilaria tenuistipitata var. liui (Red alga).